A 93-amino-acid polypeptide reads, in one-letter code: Molybdopterin synthase sulfur carrier subunit (93 aa).

Glycine 93 carries the 1-thioglycine; alternate modification. Glycine 93 bears the Glycyl adenylate; alternate mark.

Belongs to the MoaD family. MOCS2A subfamily. As to quaternary structure, heterotetramer; composed of 2 small (MOCS2A) and 2 large (MOCS2B) subunits. C-terminal thiocarboxylation occurs in 2 steps, it is first acyl-adenylated (-COAMP) via the hesA/moeB/thiF part of UBA4, then thiocarboxylated (-COSH) via the rhodanese domain of UBA4.

The protein localises to the cytoplasm. Its pathway is cofactor biosynthesis; molybdopterin biosynthesis. Its function is as follows. Acts as a sulfur carrier required for molybdopterin biosynthesis. Component of the molybdopterin synthase complex that catalyzes the conversion of precursor Z into molybdopterin by mediating the incorporation of 2 sulfur atoms into precursor Z to generate a dithiolene group. In the complex, serves as sulfur donor by being thiocarboxylated (-COSH) at its C-terminus by UBA4. After interaction with MOCS2B, the sulfur is then transferred to precursor Z to form molybdopterin. The protein is Molybdopterin synthase sulfur carrier subunit of Mycosarcoma maydis (Corn smut fungus).